The chain runs to 39 residues: Photosystem II reaction center protein L (39 aa).

The chain crosses the membrane as a helical span at residues 18–38 (SLYLGLLIVFTTGILFSSYFF).

The protein belongs to the PsbL family. In terms of assembly, PSII is composed of 1 copy each of membrane proteins PsbA, PsbB, PsbC, PsbD, PsbE, PsbF, PsbH, PsbI, PsbJ, PsbK, PsbL, PsbM, PsbT, PsbX, PsbY, PsbZ, Psb30/Ycf12, peripheral proteins PsbO, CyanoQ (PsbQ), PsbU, PsbV and a large number of cofactors. It forms dimeric complexes.

The protein localises to the cellular thylakoid membrane. In terms of biological role, one of the components of the core complex of photosystem II (PSII). PSII is a light-driven water:plastoquinone oxidoreductase that uses light energy to abstract electrons from H(2)O, generating O(2) and a proton gradient subsequently used for ATP formation. It consists of a core antenna complex that captures photons, and an electron transfer chain that converts photonic excitation into a charge separation. This subunit is found at the monomer-monomer interface and is required for correct PSII assembly and/or dimerization. This Synechococcus sp. (strain CC9311) protein is Photosystem II reaction center protein L.